We begin with the raw amino-acid sequence, 65 residues long: Putative antitoxin MJECL31 (65 aa).

The protein belongs to the UPF0165 family.

Functionally, possibly the antitoxin component of a type II toxin-antitoxin (TA) system. This chain is Putative antitoxin MJECL31, found in Methanocaldococcus jannaschii (strain ATCC 43067 / DSM 2661 / JAL-1 / JCM 10045 / NBRC 100440) (Methanococcus jannaschii).